Consider the following 210-residue polypeptide: Orotate phosphoribosyltransferase (210 aa).

5-phospho-alpha-D-ribose 1-diphosphate is bound by residues arginine 96, lysine 100, histidine 102, and 122 to 130 (DDLISTGGS). Orotate is bound at residue serine 126.

It belongs to the purine/pyrimidine phosphoribosyltransferase family. PyrE subfamily. In terms of assembly, homodimer. Requires Mg(2+) as cofactor.

The enzyme catalyses orotidine 5'-phosphate + diphosphate = orotate + 5-phospho-alpha-D-ribose 1-diphosphate. It participates in pyrimidine metabolism; UMP biosynthesis via de novo pathway; UMP from orotate: step 1/2. Catalyzes the transfer of a ribosyl phosphate group from 5-phosphoribose 1-diphosphate to orotate, leading to the formation of orotidine monophosphate (OMP). This Levilactobacillus brevis (strain ATCC 367 / BCRC 12310 / CIP 105137 / JCM 1170 / LMG 11437 / NCIMB 947 / NCTC 947) (Lactobacillus brevis) protein is Orotate phosphoribosyltransferase.